A 231-amino-acid polypeptide reads, in one-letter code: 6-hydroxymethyl-7,8-dihydropterin pyrophosphokinase (231 aa).

This sequence belongs to the archaeal 6-HMPDK family. The cofactor is Mg(2+).

It catalyses the reaction 6-hydroxymethyl-7,8-dihydropterin + ATP = (7,8-dihydropterin-6-yl)methyl diphosphate + AMP + H(+). In terms of biological role, catalyzes the transfer of diphosphate from ATP to 6-hydroxymethyl-7,8-dihydropterin (6-HMD), leading to 6-hydroxymethyl-7,8-dihydropterin diphosphate (6-HMDP). To a lesser extent, can also use CTP, UTP, and GTP as the nucleotide triphosphate substrate. The polypeptide is 6-hydroxymethyl-7,8-dihydropterin pyrophosphokinase (Pyrococcus furiosus (strain ATCC 43587 / DSM 3638 / JCM 8422 / Vc1)).